We begin with the raw amino-acid sequence, 531 residues long: Flavin-containing monooxygenase 3 (531 aa).

Residues 9–13, E32, 40–41, and 61–62 contribute to the FAD site; these read GAGVS, LW, and NS. NADP(+)-binding positions include 60–61 and 195–198; these read TN and SGCD. S401 carries the phosphoserine modification. A helical transmembrane segment spans residues 511–531; sequence YSHFLRLLAVPVLIALFLVLI.

Belongs to the FMO family. FAD is required as a cofactor. In terms of tissue distribution, detected in liver and kidney (at protein level). Expressed in kidney and liver. Weakly expressed in lung. Does not seem to be expressed in brain, adipose tissue, or muscle.

It localises to the microsome membrane. It is found in the endoplasmic reticulum membrane. It catalyses the reaction trimethylamine + NADPH + O2 = trimethylamine N-oxide + NADP(+) + H2O. The catalysed reaction is N,N-dimethylaniline + NADPH + O2 + H(+) = N,N-dimethylaniline N-oxide + NADP(+) + H2O. The enzyme catalyses hypotaurine + NADPH + O2 + H(+) = taurine + NADP(+) + H2O. It carries out the reaction (S)-nicotine + NADPH + O2 = trans-(S)-nicotine N(1')-oxide + NADP(+) + H2O. It catalyses the reaction albendazole + NADPH + O2 + H(+) = albendazole S-oxide + NADP(+) + H2O. In terms of biological role, essential hepatic enzyme that catalyzes the oxygenation of a wide variety of nitrogen- and sulfur-containing compounds including drugs as well as dietary compounds. Plays an important role in the metabolism of trimethylamine (TMA), via the production of trimethylamine N-oxide (TMAO) metabolite. TMA is generated by the action of gut microbiota using dietary precursors such as choline, choline containing compounds, betaine or L-carnitine. By regulating TMAO concentration, FMO3 directly impacts both platelet responsiveness and rate of thrombus formation. The protein is Flavin-containing monooxygenase 3 (Fmo3) of Rattus norvegicus (Rat).